The chain runs to 389 residues: Agamous-like MADS-box protein AGL65 (389 aa).

The region spanning 1–61 (MGRVKLKIKR…GRATAFHGEH (61 aa)) is the MADS-box domain. Coiled coils occupy residues 77–131 (QERT…LMEC) and 293–325 (GMEEDQEKKIKSEMELNNLQQQQQQQQQQQQQD). The disordered stretch occupies residues 310–343 (NLQQQQQQQQQQQQQDPSMYDPMANNNGGCFQIP). The span at 312-324 (QQQQQQQQQQQQQ) shows a compositional bias: low complexity.

In terms of assembly, forms a heterodimer with AGL104. Expressed in pollen.

Its subcellular location is the nucleus. Functionally, probable transcription factor that forms a heterodimer with the MADS-box protein AGL104 and is involved in the regulation of pollen maturation at the late stages of pollen development and pollen tube growth. This is Agamous-like MADS-box protein AGL65 from Arabidopsis thaliana (Mouse-ear cress).